The chain runs to 319 residues: Acetyl-coenzyme A carboxylase carboxyl transferase subunit alpha (319 aa).

The region spanning 35–296 (DLDKEIEQLE…KATLLRQLAE (262 aa)) is the CoA carboxyltransferase C-terminal domain.

Belongs to the AccA family. In terms of assembly, acetyl-CoA carboxylase is a heterohexamer composed of biotin carboxyl carrier protein (AccB), biotin carboxylase (AccC) and two subunits each of ACCase subunit alpha (AccA) and ACCase subunit beta (AccD).

The protein resides in the cytoplasm. The enzyme catalyses N(6)-carboxybiotinyl-L-lysyl-[protein] + acetyl-CoA = N(6)-biotinyl-L-lysyl-[protein] + malonyl-CoA. It participates in lipid metabolism; malonyl-CoA biosynthesis; malonyl-CoA from acetyl-CoA: step 1/1. In terms of biological role, component of the acetyl coenzyme A carboxylase (ACC) complex. First, biotin carboxylase catalyzes the carboxylation of biotin on its carrier protein (BCCP) and then the CO(2) group is transferred by the carboxyltransferase to acetyl-CoA to form malonyl-CoA. This chain is Acetyl-coenzyme A carboxylase carboxyl transferase subunit alpha, found in Vibrio vulnificus (strain CMCP6).